The primary structure comprises 196 residues: Pentatricopeptide repeat-containing protein At1g62350 (196 aa).

PPR repeat units lie at residues 70–104 (DMFF…EVLF) and 105–139 (DQHT…PDRP).

The protein belongs to the PPR family. P subfamily.

The polypeptide is Pentatricopeptide repeat-containing protein At1g62350 (Arabidopsis thaliana (Mouse-ear cress)).